We begin with the raw amino-acid sequence, 227 residues long: Cytochrome c oxidase subunit 2 (227 aa).

The Mitochondrial intermembrane segment spans residues 1-26 (MNTWMNFNLQNSNSPLMEQLMFFHNH). The helical transmembrane segment at 27 to 48 (SMLIILLITILVGYIMSSLLYN) threads the bilayer. The Mitochondrial matrix portion of the chain corresponds to 49-62 (KLYNRYLLESQNVE). Residues 63–82 (IIWTILPAFMLIFIALPSLR) traverse the membrane as a helical segment. Over 83 to 227 (LLYLLDDSNS…SFIKWISSNS (145 aa)) the chain is Mitochondrial intermembrane. Residues H161, C196, E198, C200, H204, and M207 each contribute to the Cu cation site. Residue E198 participates in Mg(2+) binding.

This sequence belongs to the cytochrome c oxidase subunit 2 family. In terms of assembly, component of the cytochrome c oxidase (complex IV, CIV), a multisubunit enzyme composed of a catalytic core of 3 subunits and several supernumerary subunits. The complex exists as a monomer or a dimer and forms supercomplexes (SCs) in the inner mitochondrial membrane with ubiquinol-cytochrome c oxidoreductase (cytochrome b-c1 complex, complex III, CIII). Requires Cu cation as cofactor.

The protein localises to the mitochondrion inner membrane. The enzyme catalyses 4 Fe(II)-[cytochrome c] + O2 + 8 H(+)(in) = 4 Fe(III)-[cytochrome c] + 2 H2O + 4 H(+)(out). Its function is as follows. Component of the cytochrome c oxidase, the last enzyme in the mitochondrial electron transport chain which drives oxidative phosphorylation. The respiratory chain contains 3 multisubunit complexes succinate dehydrogenase (complex II, CII), ubiquinol-cytochrome c oxidoreductase (cytochrome b-c1 complex, complex III, CIII) and cytochrome c oxidase (complex IV, CIV), that cooperate to transfer electrons derived from NADH and succinate to molecular oxygen, creating an electrochemical gradient over the inner membrane that drives transmembrane transport and the ATP synthase. Cytochrome c oxidase is the component of the respiratory chain that catalyzes the reduction of oxygen to water. Electrons originating from reduced cytochrome c in the intermembrane space (IMS) are transferred via the dinuclear copper A center (CU(A)) of subunit 2 and heme A of subunit 1 to the active site in subunit 1, a binuclear center (BNC) formed by heme A3 and copper B (CU(B)). The BNC reduces molecular oxygen to 2 water molecules using 4 electrons from cytochrome c in the IMS and 4 protons from the mitochondrial matrix. This is Cytochrome c oxidase subunit 2 (COII) from Ctenocephalides felis (Cat flea).